We begin with the raw amino-acid sequence, 282 residues long: Large ribosomal subunit protein uL2 (282 aa).

Disordered stretches follow at residues 31-54 and 223-282; these read KRLT…TRHI and LAMN…NTQR. Composition is skewed to basic residues over residues 34 to 54 and 270 to 282; these read TKPV…TRHI and VTRR…NTQR.

The protein belongs to the universal ribosomal protein uL2 family. As to quaternary structure, part of the 50S ribosomal subunit. Forms a bridge to the 30S subunit in the 70S ribosome.

Functionally, one of the primary rRNA binding proteins. Required for association of the 30S and 50S subunits to form the 70S ribosome, for tRNA binding and peptide bond formation. It has been suggested to have peptidyltransferase activity; this is somewhat controversial. Makes several contacts with the 16S rRNA in the 70S ribosome. The sequence is that of Large ribosomal subunit protein uL2 from Anaeromyxobacter dehalogenans (strain 2CP-1 / ATCC BAA-258).